A 183-amino-acid chain; its full sequence is uncharacterized protein (183 aa).

The protein belongs to the herpesviridae US1 family.

This is an uncharacterized protein from Human cytomegalovirus (strain AD169) (HHV-5).